Consider the following 467-residue polypeptide: Ribulose bisphosphate carboxylase large chain (467 aa).

N6,N6,N6-trimethyllysine is present on Lys-5. Residues Asn-114 and Thr-164 each contribute to the substrate site. Catalysis depends on Lys-166, which acts as the Proton acceptor. A substrate-binding site is contributed by Lys-168. Residues Lys-192, Asp-194, and Glu-195 each coordinate Mg(2+). Lys-192 carries the post-translational modification N6-carboxylysine. Catalysis depends on His-285, which acts as the Proton acceptor. The substrate site is built by Arg-286, His-318, and Ser-370.

Belongs to the RuBisCO large chain family. Type I subfamily. As to quaternary structure, heterohexadecamer of 8 large chains and 8 small chains; disulfide-linked. The disulfide link is formed within the large subunit homodimers. It depends on Mg(2+) as a cofactor. The disulfide bond which can form in the large chain dimeric partners within the hexadecamer appears to be associated with oxidative stress and protein turnover.

It localises to the plastid. The protein resides in the chloroplast. The catalysed reaction is 2 (2R)-3-phosphoglycerate + 2 H(+) = D-ribulose 1,5-bisphosphate + CO2 + H2O. It carries out the reaction D-ribulose 1,5-bisphosphate + O2 = 2-phosphoglycolate + (2R)-3-phosphoglycerate + 2 H(+). Functionally, ruBisCO catalyzes two reactions: the carboxylation of D-ribulose 1,5-bisphosphate, the primary event in carbon dioxide fixation, as well as the oxidative fragmentation of the pentose substrate in the photorespiration process. Both reactions occur simultaneously and in competition at the same active site. The sequence is that of Ribulose bisphosphate carboxylase large chain from Tasmannia insipida (Pepperbush).